A 74-amino-acid polypeptide reads, in one-letter code: Serine protease inhibitor Kazal-type 7 (74 aa).

The N-terminal stretch at 1 to 17 (MKLLGGLLLLFTATCLC) is a signal peptide. The region spanning 18–74 (NVDCDIYKKYPVVAIPCPIENIPVCGSDYITYGNKCKLCTEILRSNGKIQFLHEGHC) is the Kazal-like domain. 3 disulfides stabilise this stretch: Cys21–Cys56, Cys34–Cys53, and Cys42–Cys74.

The protein resides in the secreted. Its function is as follows. Probable serine protease inhibitor. This chain is Serine protease inhibitor Kazal-type 7 (Spink7), found in Rattus norvegicus (Rat).